Reading from the N-terminus, the 259-residue chain is HTH-type quorum sensing-dependent transcriptional regulator VjbR (259 aa).

The interval 76–179 is C12-HSL binding; sequence KNYFAIDPVF…AGIIHGTVCG (104 aa). Residues 183 to 248 enclose the HTH luxR-type domain; the sequence is ANSVASLLTP…SAVATALSLG (66 aa). The segment at residues 207 to 226 is a DNA-binding region (H-T-H motif); the sequence is DGEIAEILSIARWTVVTYLQ.

In terms of biological role, transcriptional regulator involved in the global control of Brucella gene expression. Mediates the effects of the quorum sensing autoinducer C12-HSL (N-dodecanoyl-homoserine lactone) on a large and diverse number of genes. In Brucella ovis (strain ATCC 25840 / 63/290 / NCTC 10512), this protein is HTH-type quorum sensing-dependent transcriptional regulator VjbR (vjbR).